A 138-amino-acid polypeptide reads, in one-letter code: Aspartate 1-decarboxylase (138 aa).

Ser25 serves as the catalytic Schiff-base intermediate with substrate; via pyruvic acid. Pyruvic acid (Ser) is present on Ser25. Substrate is bound at residue Thr57. The Proton donor role is filled by Tyr58. 73–75 (GAA) lines the substrate pocket.

The protein belongs to the PanD family. As to quaternary structure, heterooctamer of four alpha and four beta subunits. Pyruvate serves as cofactor. In terms of processing, is synthesized initially as an inactive proenzyme, which is activated by self-cleavage at a specific serine bond to produce a beta-subunit with a hydroxyl group at its C-terminus and an alpha-subunit with a pyruvoyl group at its N-terminus.

Its subcellular location is the cytoplasm. It carries out the reaction L-aspartate + H(+) = beta-alanine + CO2. It functions in the pathway cofactor biosynthesis; (R)-pantothenate biosynthesis; beta-alanine from L-aspartate: step 1/1. Functionally, catalyzes the pyruvoyl-dependent decarboxylation of aspartate to produce beta-alanine. This is Aspartate 1-decarboxylase from Renibacterium salmoninarum (strain ATCC 33209 / DSM 20767 / JCM 11484 / NBRC 15589 / NCIMB 2235).